The chain runs to 529 residues: Pheophorbide a oxygenase, chloroplastic (529 aa).

Disordered regions lie at residues 1–24 (MPVM…RRVP) and 46–72 (LRVA…TSSA). The transit peptide at 1–47 (MPVMAPTASLLLSPRPLPASRRVPSLPALSASGRLRLRRARADTRLR) directs the protein to the chloroplast. The Rieske domain maps to 82 to 194 (WYPVSLVEDL…TLVSQGLLFV (113 aa)). The [2Fe-2S] cluster site is built by Cys124, His126, Cys144, and His147.

[2Fe-2S] cluster serves as cofactor. As to expression, expressed in leaves. Expressed at low levels in roots, stems, panicles and seeds.

The protein resides in the plastid. The protein localises to the chloroplast. The catalysed reaction is pheophorbide a + 2 reduced [2Fe-2S]-[ferredoxin] + O2 + 2 H(+) = red chlorophyll catabolite + 2 oxidized [2Fe-2S]-[ferredoxin]. Its pathway is porphyrin-containing compound metabolism; chlorophyll degradation. Its function is as follows. Catalyzes the key reaction of chlorophyll catabolism, porphyrin macrocycle cleavage of pheophorbide a (pheide a) to a primary fluorescent catabolite (pFCC). Works in a two-step reaction with red chlorophyll catabolite reductase (RCCR). Creates the intermediate RCC through the opening of the porphyrin macrocycle by the introduction of one atom of molecular oxygen at the alpha-methine bridge. Seems to be specific for pheide a. Belongs to the chlorophyll catabolic enzymes (CCEs). May play a role in senescence and response to wounding. This Oryza sativa subsp. japonica (Rice) protein is Pheophorbide a oxygenase, chloroplastic.